Reading from the N-terminus, the 248-residue chain is Prepilin leader peptidase/N-methyltransferase (248 aa).

A helical membrane pass occupies residues 1 to 21; sequence MLSILFIFGLILGSFYYTAGC. Cys36, Cys39, Cys61, and Cys64 together coordinate Zn(2+). 6 helical membrane-spanning segments follow: residues 68-88, 90-110, 114-134, 143-163, 178-198, and 223-243; these read ISFMYPAAELVTACLFAAAGI, FGISLELFPAVVFISLLIIVA, IHFMLIPNRILIFFLPFLAAA, WYAGLLGAAAGFLFLAVIAAI, VIGFVLGVKMLAAAFFFSVLI, and AIAAGSILAYLYGDSIISFYI.

It belongs to the peptidase A24 family. Zn(2+) is required as a cofactor.

It is found in the cell membrane. It catalyses the reaction Typically cleaves a -Gly-|-Phe- bond to release an N-terminal, basic peptide of 5-8 residues from type IV prepilin, and then N-methylates the new N-terminal amino group, the methyl donor being S-adenosyl-L-methionine.. Functionally, plays a role in type II pseudopili formation by proteolytically removing the leader sequence from substrate proteins and subsequently monomethylating the alpha-amino group of the newly exposed N-terminal phenylalanine. Substrates include proteins required for biogenesis of the type II general secretory apparatus. In Bacillus subtilis (strain 168), this protein is Prepilin leader peptidase/N-methyltransferase (comC).